The chain runs to 506 residues: Histidine ammonia-lyase (506 aa).

The segment at residues Ala144–Gly146 is a cross-link (5-imidazolinone (Ala-Gly)). 2,3-didehydroalanine (Ser) is present on Ser145.

This sequence belongs to the PAL/histidase family. In terms of processing, contains an active site 4-methylidene-imidazol-5-one (MIO), which is formed autocatalytically by cyclization and dehydration of residues Ala-Ser-Gly.

It localises to the cytoplasm. It carries out the reaction L-histidine = trans-urocanate + NH4(+). It participates in amino-acid degradation; L-histidine degradation into L-glutamate; N-formimidoyl-L-glutamate from L-histidine: step 1/3. The protein is Histidine ammonia-lyase of Legionella pneumophila (strain Paris).